The following is a 118-amino-acid chain: Acidic phospholipase A2 (118 aa).

Ca(2+) is bound by residues Tyr-25, Gly-27, and Gly-29. His-45 is a catalytic residue. Position 46 (Asp-46) interacts with Ca(2+). Asp-86 is a catalytic residue.

Belongs to the phospholipase A2 family. Group II subfamily. D49 sub-subfamily. Ca(2+) is required as a cofactor. Six disulfide bonds are present. Expressed by the venom gland.

The protein resides in the secreted. The catalysed reaction is a 1,2-diacyl-sn-glycero-3-phosphocholine + H2O = a 1-acyl-sn-glycero-3-phosphocholine + a fatty acid + H(+). Functionally, PLA2 catalyzes the calcium-dependent hydrolysis of the 2-acyl groups in 3-sn-phosphoglycerides. The sequence is that of Acidic phospholipase A2 from Bitis gabonica (Gaboon adder).